Consider the following 364-residue polypeptide: Uroporphyrinogen decarboxylase (364 aa).

Substrate-binding positions include 28–32 (RQAGR), aspartate 78, tyrosine 160, threonine 215, and histidine 333.

The protein belongs to the uroporphyrinogen decarboxylase family. As to quaternary structure, homodimer.

It is found in the cytoplasm. It catalyses the reaction uroporphyrinogen III + 4 H(+) = coproporphyrinogen III + 4 CO2. The protein operates within porphyrin-containing compound metabolism; protoporphyrin-IX biosynthesis; coproporphyrinogen-III from 5-aminolevulinate: step 4/4. In terms of biological role, catalyzes the decarboxylation of four acetate groups of uroporphyrinogen-III to yield coproporphyrinogen-III. The sequence is that of Uroporphyrinogen decarboxylase from Burkholderia cenocepacia (strain ATCC BAA-245 / DSM 16553 / LMG 16656 / NCTC 13227 / J2315 / CF5610) (Burkholderia cepacia (strain J2315)).